Here is a 365-residue protein sequence, read N- to C-terminus: Ferredoxin--NADP reductase, chloroplastic (365 aa).

The disordered stretch occupies residues 1–22 (MAAAVTAAVSFPSTKSTPLSTR). Positions 11–22 (FPSTKSTPLSTR) are enriched in polar residues. Residues 86 to 208 (KNPYTGRCLL…TGPVGKEMLM (123 aa)) enclose the FAD-binding FR-type domain. FAD is bound by residues 144–147 (RLYS), 165–167 (CVK), tyrosine 171, 182–184 (VCS), and threonine 223. NADP(+) is bound by residues serine 147 and lysine 167. Residues threonine 223, 255–256 (VP), 285–286 (SR), lysine 295, 324–325 (GL), and glutamate 363 contribute to the NADP(+) site.

The protein belongs to the ferredoxin--NADP reductase type 1 family. FAD serves as cofactor.

The protein localises to the plastid. Its subcellular location is the chloroplast stroma. The protein resides in the chloroplast thylakoid membrane. It catalyses the reaction 2 reduced [2Fe-2S]-[ferredoxin] + NADP(+) + H(+) = 2 oxidized [2Fe-2S]-[ferredoxin] + NADPH. It participates in energy metabolism; photosynthesis. Its function is as follows. May play a key role in regulating the relative amounts of cyclic and non-cyclic electron flow to meet the demands of the plant for ATP and reducing power. The sequence is that of Ferredoxin--NADP reductase, chloroplastic (PETH) from Mesembryanthemum crystallinum (Common ice plant).